The chain runs to 828 residues: G-type lectin S-receptor-like serine/threonine-protein kinase At2g19130 (828 aa).

A signal peptide spans 1–22; sequence MVSFLTLTSFFFICFFIHGSSA. Positions 23-146 constitute a Bulb-type lectin domain; sequence VDTISGDFTL…GSSLSANVLW (124 aa). At 23–439 the chain is on the extracellular side; that stretch reads VDTISGDFTL…GASGKSNNKG (417 aa). Residues asparagine 85, asparagine 113, asparagine 203, asparagine 234, asparagine 240, and asparagine 255 are each glycosylated (N-linked (GlcNAc...) asparagine). The 37-residue stretch at 286 to 322 folds into the EGF-like domain; it reads PRQQCQVYRYCGSFGICSDKSEPFCRCPQGFRPMSQK. 4 disulfide bridges follow: cysteine 290–cysteine 302, cysteine 296–cysteine 310, cysteine 372–cysteine 394, and cysteine 376–cysteine 382. Residues 341–422 enclose the PAN domain; that stretch reads CSRGDINQFF…EGNIFYLRLA (82 aa). Residues 440–460 traverse the membrane as a helical segment; sequence LIFGAVLGSLGVIVLVLLVVI. Topologically, residues 461–828 are cytoplasmic; sequence LILRYRRRKR…KKMTNDNSSA (368 aa). A Protein kinase domain is found at 493-770; that stretch reads KNFSDKLGGG…QVVQILEGVL (278 aa). ATP contacts are provided by residues 499-507 and lysine 521; that span reads LGGGGFGSV. Position 527 is a phosphoserine (serine 527). The interval 582 to 600 is caM-binding; that stretch reads VEEKIVLGWKLRFQIALGT. Aspartate 619 acts as the Proton acceptor in catalysis. A Phosphothreonine modification is found at threonine 653. The interval 796-828 is disordered; it reads ESSSSSSHNSSQNHKHSSSSSSSKKMTNDNSSA. A compositionally biased stretch (low complexity) spans 797 to 828; the sequence is SSSSSSHNSSQNHKHSSSSSSSKKMTNDNSSA. Serine 815 bears the Phosphoserine mark.

Belongs to the protein kinase superfamily. Ser/Thr protein kinase family.

The protein localises to the cell membrane. The catalysed reaction is L-seryl-[protein] + ATP = O-phospho-L-seryl-[protein] + ADP + H(+). It carries out the reaction L-threonyl-[protein] + ATP = O-phospho-L-threonyl-[protein] + ADP + H(+). This is G-type lectin S-receptor-like serine/threonine-protein kinase At2g19130 from Arabidopsis thaliana (Mouse-ear cress).